Consider the following 207-residue polypeptide: Homeobox protein BarH-like 1 (207 aa).

A DNA-binding region (homeobox) is located at residues 95-154 (GRRSRTVFTELQLMGLEKRFEKQKYLSTPDRIDLAESLGLSQLQVKTWYQNRRMKWKKIV). Residues 157 to 207 (GGGLESPTKPKGRPKKNSIPSSEQLSEQERAKETEKPPESPGEPSERQQEE) form a disordered region. Basic and acidic residues predominate over residues 183 to 207 (EQERAKETEKPPESPGEPSERQQEE).

It belongs to the BAR homeobox family. As to expression, expressed predominantly in the facial primordia, developing stomach, and proximal limbs.

Its subcellular location is the nucleus. In terms of biological role, transcription factor, which is involved in craniofacial development, in odontogenic region definition, and in stomach organogenesis. Binds to a regulatory module of the NCAM promoter. In Gallus gallus (Chicken), this protein is Homeobox protein BarH-like 1 (BARX1).